Reading from the N-terminus, the 264-residue chain is Thymidylate synthase (264 aa).

DUMP is bound at residue Arg21. His51 serves as a coordination point for (6R)-5,10-methylene-5,6,7,8-tetrahydrofolate. 126-127 contributes to the dUMP binding site; the sequence is RR. Residue Cys146 is the Nucleophile of the active site. DUMP is bound by residues 166–169, Asn177, and 207–209; these read RSCD and HLY. Asp169 provides a ligand contact to (6R)-5,10-methylene-5,6,7,8-tetrahydrofolate. Residue Ala263 participates in (6R)-5,10-methylene-5,6,7,8-tetrahydrofolate binding.

Belongs to the thymidylate synthase family. Bacterial-type ThyA subfamily. As to quaternary structure, homodimer.

It is found in the cytoplasm. It carries out the reaction dUMP + (6R)-5,10-methylene-5,6,7,8-tetrahydrofolate = 7,8-dihydrofolate + dTMP. Its pathway is pyrimidine metabolism; dTTP biosynthesis. Functionally, catalyzes the reductive methylation of 2'-deoxyuridine-5'-monophosphate (dUMP) to 2'-deoxythymidine-5'-monophosphate (dTMP) while utilizing 5,10-methylenetetrahydrofolate (mTHF) as the methyl donor and reductant in the reaction, yielding dihydrofolate (DHF) as a by-product. This enzymatic reaction provides an intracellular de novo source of dTMP, an essential precursor for DNA biosynthesis. The polypeptide is Thymidylate synthase (Edwardsiella ictaluri (strain 93-146)).